A 472-amino-acid chain; its full sequence is 3-isopropylmalate dehydratase large subunit (472 aa).

Residues C347, C407, and C410 each contribute to the [4Fe-4S] cluster site.

Belongs to the aconitase/IPM isomerase family. LeuC type 1 subfamily. As to quaternary structure, heterodimer of LeuC and LeuD. Requires [4Fe-4S] cluster as cofactor.

It catalyses the reaction (2R,3S)-3-isopropylmalate = (2S)-2-isopropylmalate. The protein operates within amino-acid biosynthesis; L-leucine biosynthesis; L-leucine from 3-methyl-2-oxobutanoate: step 2/4. Its function is as follows. Catalyzes the isomerization between 2-isopropylmalate and 3-isopropylmalate, via the formation of 2-isopropylmaleate. This Bacillus licheniformis (strain ATCC 14580 / DSM 13 / JCM 2505 / CCUG 7422 / NBRC 12200 / NCIMB 9375 / NCTC 10341 / NRRL NRS-1264 / Gibson 46) protein is 3-isopropylmalate dehydratase large subunit.